A 74-amino-acid polypeptide reads, in one-letter code: Turripeptide OL135 (74 aa).

The N-terminal stretch at 1–20 (MKVPIVLMLVLLLIMPLSDG) is a signal peptide. The propeptide occupies 21-28 (YERKRXXX).

It belongs to the conopeptide P-like superfamily. In terms of processing, contains 3 disulfide bonds. Expressed by the venom duct.

It is found in the secreted. Functionally, acts as a neurotoxin by inhibiting an ion channel. This chain is Turripeptide OL135, found in Iotyrris olangoensis (Sea snail).